A 152-amino-acid chain; its full sequence is SsrA-binding protein (152 aa).

A disordered region spans residues 124 to 152 (KKLHDKRDTAAERDWQRDKARLMKGDRGD). The span at 128 to 152 (DKRDTAAERDWQRDKARLMKGDRGD) shows a compositional bias: basic and acidic residues.

The protein belongs to the SmpB family.

It is found in the cytoplasm. Its function is as follows. Required for rescue of stalled ribosomes mediated by trans-translation. Binds to transfer-messenger RNA (tmRNA), required for stable association of tmRNA with ribosomes. tmRNA and SmpB together mimic tRNA shape, replacing the anticodon stem-loop with SmpB. tmRNA is encoded by the ssrA gene; the 2 termini fold to resemble tRNA(Ala) and it encodes a 'tag peptide', a short internal open reading frame. During trans-translation Ala-aminoacylated tmRNA acts like a tRNA, entering the A-site of stalled ribosomes, displacing the stalled mRNA. The ribosome then switches to translate the ORF on the tmRNA; the nascent peptide is terminated with the 'tag peptide' encoded by the tmRNA and targeted for degradation. The ribosome is freed to recommence translation, which seems to be the essential function of trans-translation. The sequence is that of SsrA-binding protein from Caulobacter vibrioides (strain ATCC 19089 / CIP 103742 / CB 15) (Caulobacter crescentus).